The following is a 262-amino-acid chain: uncharacterized protein (262 aa).

Disordered stretches follow at residues 1–30 and 232–262; these read MGKKKFIENEDGTTEVQETESEAPKDKKEK and EEEEVEDEADEETDVKEKVKEEEDEDEDMEE. Acidic residues-rich tracts occupy residues 9–21, 232–245, and 253–262; these read NEDGTTEVQETES, EEEEVEDEADEETD, and EEDEDEDMEE.

This is an uncharacterized protein from Caenorhabditis elegans.